The primary structure comprises 556 residues: Dihydroxy-acid dehydratase (556 aa).

Asp78 contributes to the Mg(2+) binding site. Cys119 is a binding site for [2Fe-2S] cluster. The Mg(2+) site is built by Asp120 and Lys121. N6-carboxylysine is present on Lys121. Residue Cys191 participates in [2Fe-2S] cluster binding. Position 442 (Glu442) interacts with Mg(2+). Ser468 serves as the catalytic Proton acceptor.

Belongs to the IlvD/Edd family. As to quaternary structure, homodimer. The cofactor is [2Fe-2S] cluster. It depends on Mg(2+) as a cofactor.

The enzyme catalyses (2R)-2,3-dihydroxy-3-methylbutanoate = 3-methyl-2-oxobutanoate + H2O. It catalyses the reaction (2R,3R)-2,3-dihydroxy-3-methylpentanoate = (S)-3-methyl-2-oxopentanoate + H2O. The protein operates within amino-acid biosynthesis; L-isoleucine biosynthesis; L-isoleucine from 2-oxobutanoate: step 3/4. It functions in the pathway amino-acid biosynthesis; L-valine biosynthesis; L-valine from pyruvate: step 3/4. Its function is as follows. Functions in the biosynthesis of branched-chain amino acids. Catalyzes the dehydration of (2R,3R)-2,3-dihydroxy-3-methylpentanoate (2,3-dihydroxy-3-methylvalerate) into 2-oxo-3-methylpentanoate (2-oxo-3-methylvalerate) and of (2R)-2,3-dihydroxy-3-methylbutanoate (2,3-dihydroxyisovalerate) into 2-oxo-3-methylbutanoate (2-oxoisovalerate), the penultimate precursor to L-isoleucine and L-valine, respectively. The polypeptide is Dihydroxy-acid dehydratase (Clostridium beijerinckii (strain ATCC 51743 / NCIMB 8052) (Clostridium acetobutylicum)).